Here is a 950-residue protein sequence, read N- to C-terminus: 2-oxoglutarate dehydrogenase E1 component (950 aa).

It belongs to the alpha-ketoglutarate dehydrogenase family. In terms of assembly, homodimer. Part of the 2-oxoglutarate dehydrogenase (OGDH) complex composed of E1 (2-oxoglutarate dehydrogenase), E2 (dihydrolipoamide succinyltransferase) and E3 (dihydrolipoamide dehydrogenase); the complex contains multiple copies of the three enzymatic components (E1, E2 and E3). It depends on thiamine diphosphate as a cofactor.

It catalyses the reaction N(6)-[(R)-lipoyl]-L-lysyl-[protein] + 2-oxoglutarate + H(+) = N(6)-[(R)-S(8)-succinyldihydrolipoyl]-L-lysyl-[protein] + CO2. In terms of biological role, E1 component of the 2-oxoglutarate dehydrogenase (OGDH) complex which catalyzes the decarboxylation of 2-oxoglutarate, the first step in the conversion of 2-oxoglutarate to succinyl-CoA and CO(2). The polypeptide is 2-oxoglutarate dehydrogenase E1 component (odhA) (Cupriavidus necator (strain ATCC 17699 / DSM 428 / KCTC 22496 / NCIMB 10442 / H16 / Stanier 337) (Ralstonia eutropha)).